The following is a 136-amino-acid chain: Cytochrome c oxidase subunit 13, mitochondrial (136 aa).

A mitochondrion-targeting transit peptide spans 1-29 (MFAQRQMFFARLAANLRAPAVRQTVQRRF). Residues 30–62 (ASTPANESGKNAFVREREAVKQHAAETTELWRK) lie on the Mitochondrial matrix side of the membrane. Residues 63 to 83 (ISLYGIPPALALAGYNAYTLY) form a helical membrane-spanning segment. Residues 84 to 136 (NEHWEHWSHLPPLEERTEYPYQNIRTRNYPWGDGDKTLFWNESVNYHNRDKVT) lie on the Mitochondrial intermembrane side of the membrane.

Belongs to the cytochrome c oxidase subunit 6A family. As to quaternary structure, component of the cytochrome c oxidase (complex IV, CIV), a multisubunit enzyme composed of 11 subunits. The complex is composed of a catalytic core of 3 subunits Cox1, Cox2 and Cox3, encoded in the mitochondrial DNA, and 8 supernumerary subunits Cox4, Cox5a/Cox5, Cox6, Cox7, Cox8, Cox7a/Cox9, Cox6b/Cox12 and Cox6a/Cox13, which are encoded in the nuclear genome. The complex exists as a monomer or a dimer and forms respiratory supercomplexes (SCs) in the inner mitochondrial membrane with NADH-ubiquinone oxidoreductase (complex I, CI) and ubiquinol-cytochrome c oxidoreductase (cytochrome b-c1 complex, complex III, CIII), resulting in various different assemblies (supercomplexes I(1)IV(1), I(1)III(3)IV(2), III(2)IV(1) and III(2)IV(2) as well as larger supercomplexes of compositions like I(1)III(2)IV(5-6)). Cox6a/Cox13 was not present in the cryo-EM structure. It may be involved in complex IV dimer formation and might not be always expressed. This would explain its absence in the map of the isolated monomer.

The protein resides in the mitochondrion inner membrane. It participates in energy metabolism; oxidative phosphorylation. Functionally, component of the cytochrome c oxidase, the last enzyme in the mitochondrial electron transport chain which drives oxidative phosphorylation. The respiratory chain contains 3 multisubunit complexes succinate dehydrogenase (complex II, CII), ubiquinol-cytochrome c oxidoreductase (cytochrome b-c1 complex, complex III, CIII) and cytochrome c oxidase (complex IV, CIV), that cooperate to transfer electrons derived from NADH and succinate to molecular oxygen, creating an electrochemical gradient over the inner membrane that drives transmembrane transport and the ATP synthase. Cytochrome c oxidase is the component of the respiratory chain that catalyzes the reduction of oxygen to water. Electrons originating from reduced cytochrome c in the intermembrane space (IMS) are transferred via the dinuclear copper A center (CU(A)) of Cox2 and heme A of Cox1 to the active site in Cox1, a binuclear center (BNC) formed by heme A3 and copper B (CU(B)). The BNC reduces molecular oxygen to 2 water molecules using 4 electrons from cytochrome c in the IMS and 4 protons from the mitochondrial matrix. This chain is Cytochrome c oxidase subunit 13, mitochondrial (eat-5), found in Neurospora crassa (strain ATCC 24698 / 74-OR23-1A / CBS 708.71 / DSM 1257 / FGSC 987).